Consider the following 86-residue polypeptide: Protein P17 (86 aa).

The tract at residues 63–86 (SPAEKPDNQPELTGITFEGDNNDQ) is disordered.

As to quaternary structure, homotetramer.

Its function is as follows. Assembly protein that acts late in phage assembly, after capsid protein folding and multimerization, and sorting of membrane proteins has occurred. The major coat protein P3 and two assembly factors (P10 and P17) are needed during the assembly of the virus particle inside the host cell, when the capsid protein multimers are capable of enclosing the host-derived membrane, containing the virus-encoded membrane-associated proteins. This chain is Protein P17 (XVII), found in Enterobacteria phage PRD1 (Bacteriophage PRD1).